Consider the following 170-residue polypeptide: Plastocyanin, chloroplastic (170 aa).

The N-terminal 71 residues, 1-71 (MATVTSAAVA…SAMLASNAMA (71 aa)), are a transit peptide targeting the chloroplast. Residues 72–170 (LEVLLGGDDG…AGMVGKVTVN (99 aa)) enclose the Plastocyanin-like domain. Cu cation contacts are provided by His-108, Cys-155, His-158, and Met-163.

It belongs to the plastocyanin family. Cu(2+) is required as a cofactor.

The protein localises to the plastid. Its subcellular location is the chloroplast thylakoid membrane. Participates in electron transfer between P700 and the cytochrome b6-f complex in photosystem I. This is Plastocyanin, chloroplastic (PETE) from Solanum lycopersicum (Tomato).